A 459-amino-acid chain; its full sequence is uncharacterized protein (459 aa).

Residues 13–145 (TESAIKRVVG…DALSKGRELK (133 aa)) enclose the B12-binding domain. Positions 188 to 402 (ADGVPFGVVM…MNWRKYTTID (215 aa)) constitute a Radical SAM core domain. [4Fe-4S] cluster-binding residues include cysteine 202, cysteine 206, and cysteine 209.

It belongs to the methyltransferase superfamily. The cofactor is [4Fe-4S] cluster.

This is an uncharacterized protein from Pyrococcus horikoshii (strain ATCC 700860 / DSM 12428 / JCM 9974 / NBRC 100139 / OT-3).